The sequence spans 591 residues: Probable translation initiation factor IF-2 (591 aa).

Residues Ile-6 to Met-220 enclose the tr-type G domain. Residues Gly-15–Thr-22 form a G1 region. Residue Gly-15–Thr-22 coordinates GTP. The interval Ala-40–His-44 is G2. A G3 region spans residues Asp-76–Gly-79. GTP-binding positions include Asp-76–His-80 and Thr-130–Asp-133. Residues Thr-130 to Asp-133 form a G4 region. Residues Ser-198 to His-200 form a G5 region.

This sequence belongs to the TRAFAC class translation factor GTPase superfamily. Classic translation factor GTPase family. IF-2 subfamily.

Function in general translation initiation by promoting the binding of the formylmethionine-tRNA to ribosomes. Seems to function along with eIF-2. The polypeptide is Probable translation initiation factor IF-2 (Methanoregula boonei (strain DSM 21154 / JCM 14090 / 6A8)).